A 408-amino-acid polypeptide reads, in one-letter code: Aminoacylase-1 (408 aa).

Histidine 80 serves as a coordination point for Zn(2+). Residue aspartate 82 is part of the active site. Residue aspartate 113 coordinates Zn(2+). The active-site Proton acceptor is glutamate 147. Zn(2+) contacts are provided by glutamate 148, glutamate 175, and histidine 373.

This sequence belongs to the peptidase M20A family. As to quaternary structure, homodimer. Interacts with SPHK1. Zn(2+) serves as cofactor.

It is found in the cytoplasm. The enzyme catalyses an N-acyl-L-amino acid + H2O = an L-alpha-amino acid + a carboxylate. It carries out the reaction N-acetyl-L-methionine + H2O = L-methionine + acetate. It catalyses the reaction N-acetyl-L-glutamine + H2O = L-glutamine + acetate. Catalyzes the hydrolysis of N-acetylated amino acids to acetate and free amino acids. The sequence is that of Aminoacylase-1 (Acy1) from Mus musculus (Mouse).